A 249-amino-acid chain; its full sequence is Adenylate kinase (249 aa).

43–48 serves as a coordination point for ATP; that stretch reads GAGKGT. The segment at 63–92 is NMP; sequence ATGDMLRAQVAAKTALGVEAKKIMDQGGLV. AMP-binding positions include Thr-64, Arg-69, 90–92, 119–122, and Gln-126; these read GLV and GFPR. The interval 160–197 is LID; sequence GRLVHPASGRSYHKLFNPPKKDMTDDVTGEPLVQRSDD. Residues Arg-161 and 170-171 each bind ATP; that span reads SY. The disordered stretch occupies residues 177–197; the sequence is PPKKDMTDDVTGEPLVQRSDD. Residues Arg-194 and Arg-205 each contribute to the AMP site. ATP is bound at residue Gln-233.

It belongs to the adenylate kinase family. AK2 subfamily. In terms of assembly, monomer.

The protein localises to the cytoplasm. It localises to the cytosol. It is found in the mitochondrion intermembrane space. The catalysed reaction is AMP + ATP = 2 ADP. Functionally, catalyzes the reversible transfer of the terminal phosphate group between ATP and AMP. Plays an important role in cellular energy homeostasis and in adenine nucleotide metabolism. Adenylate kinase activity is critical for regulation of the phosphate utilization and the AMP de novo biosynthesis pathways. This is Adenylate kinase from Candida albicans (strain SC5314 / ATCC MYA-2876) (Yeast).